The primary structure comprises 162 residues: Phosphopantetheine adenylyltransferase (162 aa).

Ser-11 contributes to the substrate binding site. ATP contacts are provided by residues 11–12 (SF) and His-19. 3 residues coordinate substrate: Lys-43, Val-76, and Arg-90. ATP contacts are provided by residues 91-93 (GLR), Glu-101, and 126-132 (LKFVSSS).

This sequence belongs to the bacterial CoaD family. Homohexamer. It depends on Mg(2+) as a cofactor.

The protein localises to the cytoplasm. It carries out the reaction (R)-4'-phosphopantetheine + ATP + H(+) = 3'-dephospho-CoA + diphosphate. It participates in cofactor biosynthesis; coenzyme A biosynthesis; CoA from (R)-pantothenate: step 4/5. In terms of biological role, reversibly transfers an adenylyl group from ATP to 4'-phosphopantetheine, yielding dephospho-CoA (dPCoA) and pyrophosphate. This chain is Phosphopantetheine adenylyltransferase, found in Streptococcus suis (strain 05ZYH33).